A 160-amino-acid chain; its full sequence is Major strawberry allergen Fra a 1.07 (160 aa).

It belongs to the BetVI family. In terms of processing, phosphorylated in vivo. Phosphorylation prevents its activity as ribonuclease. In terms of tissue distribution, highly expressed in roots. Expressed a low levels in ripe red fruits.

Its function is as follows. Possesses ribonuclease activity in vitro. The sequence is that of Major strawberry allergen Fra a 1.07 from Fragaria ananassa (Strawberry).